The following is a 221-amino-acid chain: Ribosomal RNA small subunit methyltransferase G (221 aa).

S-adenosyl-L-methionine contacts are provided by residues G90, L95, 141-142 (VE), and R154.

Belongs to the methyltransferase superfamily. RNA methyltransferase RsmG family.

It localises to the cytoplasm. It carries out the reaction guanosine(527) in 16S rRNA + S-adenosyl-L-methionine = N(7)-methylguanosine(527) in 16S rRNA + S-adenosyl-L-homocysteine. Functionally, specifically methylates the N7 position of guanine in position 527 of 16S rRNA. The polypeptide is Ribosomal RNA small subunit methyltransferase G (Polaromonas naphthalenivorans (strain CJ2)).